Reading from the N-terminus, the 281-residue chain is Probable endonuclease 4 (281 aa).

The Zn(2+) site is built by H69, H109, E145, D179, H182, H216, D229, H231, and E261.

Belongs to the AP endonuclease 2 family. Zn(2+) serves as cofactor.

The enzyme catalyses Endonucleolytic cleavage to 5'-phosphooligonucleotide end-products.. Its function is as follows. Endonuclease IV plays a role in DNA repair. It cleaves phosphodiester bonds at apurinic or apyrimidinic (AP) sites, generating a 3'-hydroxyl group and a 5'-terminal sugar phosphate. The chain is Probable endonuclease 4 from Proteus mirabilis (strain HI4320).